The sequence spans 86 residues: Neurotoxin LmNaTx34.1 (86 aa).

A signal peptide spans 1-18; that stretch reads MKTVILVVIALMVIEVQG. The LCN-type CS-alpha/beta domain occupies 19–85; that stretch reads DGYLMVRAGI…IWTYEKNTCS (67 aa). Intrachain disulfides connect Cys32-Cys84, Cys36-Cys57, Cys43-Cys64, and Cys47-Cys66.

This sequence belongs to the long (4 C-C) scorpion toxin superfamily. Sodium channel inhibitor family. Beta subfamily. In terms of tissue distribution, expressed by the venom gland.

The protein resides in the secreted. Binds voltage-independently at site-4 of sodium channels (Nav) and shift the voltage of activation toward more negative potentials thereby affecting sodium channel activation and promoting spontaneous and repetitive firing. In Lychas mucronatus (Chinese swimming scorpion), this protein is Neurotoxin LmNaTx34.1.